The following is a 362-amino-acid chain: MAQIFNFSSGPAMLPAEVLKQAQQELRDWNGLGTSVMEVSHRGKEFIQVAEEAEKDFRDLLHVPSNYKVLFCHGGGRGQFAAVPLNILGDKTTADYVDAGYWAASAIKEAKKYCTPNVFDAKVTVDGLRAVKPMREWQLSDNAAYMHYCPNETIDGIAIDETPDFGKDVVVAADFSSTILSRPIDVSRYGVIYAGAQKNIGPAGLTIVIVREDLLGKANIACPSILDYSILNDNGSMFNTPPTFAWYLSGLVFKWLKANGGVAEMDKINQQKAELLYGVIDNSDFYRNDVAKANRSRMNVPFQLADSALDKLFLEESFAAGLHALKGHRVVGGMRASIYNAMPLEGVKALTDFMVEFERRHG.

Ser9 and Arg42 together coordinate L-glutamate. Pyridoxal 5'-phosphate is bound by residues 76–77 (GR), Trp102, Thr153, Asp174, and Gln197. At Lys198 the chain carries N6-(pyridoxal phosphate)lysine. 239–240 (NT) lines the pyridoxal 5'-phosphate pocket.

It belongs to the class-V pyridoxal-phosphate-dependent aminotransferase family. SerC subfamily. In terms of assembly, homodimer. Pyridoxal 5'-phosphate is required as a cofactor.

Its subcellular location is the cytoplasm. It carries out the reaction O-phospho-L-serine + 2-oxoglutarate = 3-phosphooxypyruvate + L-glutamate. It catalyses the reaction 4-(phosphooxy)-L-threonine + 2-oxoglutarate = (R)-3-hydroxy-2-oxo-4-phosphooxybutanoate + L-glutamate. The protein operates within amino-acid biosynthesis; L-serine biosynthesis; L-serine from 3-phospho-D-glycerate: step 2/3. It functions in the pathway cofactor biosynthesis; pyridoxine 5'-phosphate biosynthesis; pyridoxine 5'-phosphate from D-erythrose 4-phosphate: step 3/5. In terms of biological role, catalyzes the reversible conversion of 3-phosphohydroxypyruvate to phosphoserine and of 3-hydroxy-2-oxo-4-phosphonooxybutanoate to phosphohydroxythreonine. This chain is Phosphoserine aminotransferase, found in Shigella dysenteriae serotype 1 (strain Sd197).